Here is a 572-residue protein sequence, read N- to C-terminus: Proline--tRNA ligase (572 aa).

Belongs to the class-II aminoacyl-tRNA synthetase family. ProS type 1 subfamily. As to quaternary structure, homodimer.

It localises to the cytoplasm. It carries out the reaction tRNA(Pro) + L-proline + ATP = L-prolyl-tRNA(Pro) + AMP + diphosphate. Its function is as follows. Catalyzes the attachment of proline to tRNA(Pro) in a two-step reaction: proline is first activated by ATP to form Pro-AMP and then transferred to the acceptor end of tRNA(Pro). As ProRS can inadvertently accommodate and process non-cognate amino acids such as alanine and cysteine, to avoid such errors it has two additional distinct editing activities against alanine. One activity is designated as 'pretransfer' editing and involves the tRNA(Pro)-independent hydrolysis of activated Ala-AMP. The other activity is designated 'posttransfer' editing and involves deacylation of mischarged Ala-tRNA(Pro). The misacylated Cys-tRNA(Pro) is not edited by ProRS. This is Proline--tRNA ligase from Hydrogenovibrio crunogenus (strain DSM 25203 / XCL-2) (Thiomicrospira crunogena).